The following is a 312-amino-acid chain: DNA-directed RNA polymerase subunit alpha (312 aa).

The alpha N-terminal domain (alpha-NTD) stretch occupies residues 1–229 (MLQYQIDRID…ELFQPLATVT (229 aa)). Positions 240–312 (PSPEAQIPLE…ISIPQSRTSV (73 aa)) are alpha C-terminal domain (alpha-CTD).

It belongs to the RNA polymerase alpha chain family. As to quaternary structure, in cyanobacteria the RNAP catalytic core is composed of 2 alpha, 1 beta, 1 beta', 1 gamma and 1 omega subunit. When a sigma factor is associated with the core the holoenzyme is formed, which can initiate transcription.

The enzyme catalyses RNA(n) + a ribonucleoside 5'-triphosphate = RNA(n+1) + diphosphate. Its function is as follows. DNA-dependent RNA polymerase catalyzes the transcription of DNA into RNA using the four ribonucleoside triphosphates as substrates. The chain is DNA-directed RNA polymerase subunit alpha from Prochlorococcus marinus (strain AS9601).